A 363-amino-acid chain; its full sequence is Outer membrane protein P2 (363 aa).

A signal peptide spans 1–20 (MKKTLAALIVGAFAASAANA).

This sequence belongs to the Gram-negative porin family. In terms of assembly, homotrimer.

The protein localises to the cell outer membrane. Functionally, forms pores that allow passive diffusion of small molecules across the outer membrane. The protein is Outer membrane protein P2 (ompP2) of Haemophilus influenzae.